The primary structure comprises 637 residues: tRNA uridine 5-carboxymethylaminomethyl modification enzyme MnmG (637 aa).

FAD is bound by residues 15–20, Ile127, and Ser182; that span reads GAGHAG. Residue 276-290 participates in NAD(+) binding; sequence GPRYCPSIEDKIVRF. Gln373 contacts FAD.

The protein belongs to the MnmG family. As to quaternary structure, homodimer. Heterotetramer of two MnmE and two MnmG subunits. The cofactor is FAD.

Its subcellular location is the cytoplasm. In terms of biological role, NAD-binding protein involved in the addition of a carboxymethylaminomethyl (cmnm) group at the wobble position (U34) of certain tRNAs, forming tRNA-cmnm(5)s(2)U34. The chain is tRNA uridine 5-carboxymethylaminomethyl modification enzyme MnmG from Streptococcus pneumoniae (strain ATCC BAA-255 / R6).